The chain runs to 302 residues: Succinate--CoA ligase [ADP-forming] subunit alpha (302 aa).

CoA contacts are provided by residues 17–20, K43, and 96–98; these read TGST and ITE. Substrate is bound at residue Y159. H247 functions as the Tele-phosphohistidine intermediate in the catalytic mechanism.

The protein belongs to the succinate/malate CoA ligase alpha subunit family. As to quaternary structure, heterotetramer of two alpha and two beta subunits.

It catalyses the reaction succinate + ATP + CoA = succinyl-CoA + ADP + phosphate. The catalysed reaction is GTP + succinate + CoA = succinyl-CoA + GDP + phosphate. The protein operates within carbohydrate metabolism; tricarboxylic acid cycle; succinate from succinyl-CoA (ligase route): step 1/1. In terms of biological role, succinyl-CoA synthetase functions in the citric acid cycle (TCA), coupling the hydrolysis of succinyl-CoA to the synthesis of either ATP or GTP and thus represents the only step of substrate-level phosphorylation in the TCA. The alpha subunit of the enzyme binds the substrates coenzyme A and phosphate, while succinate binding and nucleotide specificity is provided by the beta subunit. This Staphylococcus aureus (strain MRSA252) protein is Succinate--CoA ligase [ADP-forming] subunit alpha.